Consider the following 140-residue polypeptide: MERTLTILKPDCVRKQLIGAVIDKIERAGFRVVAMKKTRLTQETAGEFYAVHRERPFYGELVEFMSSGPCVPMILEKENAVADFRTLIGATDPAQADEGTVRKLYADSKGENIVHGSDSAENAAVEAGFFFSAEEVVRVD.

The ATP site is built by Lys9, Phe57, Arg85, Thr91, Arg102, and Asn112. His115 functions as the Pros-phosphohistidine intermediate in the catalytic mechanism.

The protein belongs to the NDK family. In terms of assembly, homotetramer. Requires Mg(2+) as cofactor.

Its subcellular location is the cytoplasm. It catalyses the reaction a 2'-deoxyribonucleoside 5'-diphosphate + ATP = a 2'-deoxyribonucleoside 5'-triphosphate + ADP. It carries out the reaction a ribonucleoside 5'-diphosphate + ATP = a ribonucleoside 5'-triphosphate + ADP. In terms of biological role, major role in the synthesis of nucleoside triphosphates other than ATP. The ATP gamma phosphate is transferred to the NDP beta phosphate via a ping-pong mechanism, using a phosphorylated active-site intermediate. The sequence is that of Nucleoside diphosphate kinase from Chlorobium limicola (strain DSM 245 / NBRC 103803 / 6330).